The following is a 286-amino-acid chain: Bifunctional protein FolD (286 aa).

Residues Gly-167 to Ser-169 and Ile-233 each bind NADP(+).

It belongs to the tetrahydrofolate dehydrogenase/cyclohydrolase family. Homodimer.

The catalysed reaction is (6R)-5,10-methylene-5,6,7,8-tetrahydrofolate + NADP(+) = (6R)-5,10-methenyltetrahydrofolate + NADPH. The enzyme catalyses (6R)-5,10-methenyltetrahydrofolate + H2O = (6R)-10-formyltetrahydrofolate + H(+). It functions in the pathway one-carbon metabolism; tetrahydrofolate interconversion. Functionally, catalyzes the oxidation of 5,10-methylenetetrahydrofolate to 5,10-methenyltetrahydrofolate and then the hydrolysis of 5,10-methenyltetrahydrofolate to 10-formyltetrahydrofolate. In Limosilactobacillus reuteri (strain DSM 20016) (Lactobacillus reuteri), this protein is Bifunctional protein FolD.